The following is a 160-amino-acid chain: 2-C-methyl-D-erythritol 2,4-cyclodiphosphate synthase (160 aa).

A divalent metal cation contacts are provided by Asp-11 and His-13. 4-CDP-2-C-methyl-D-erythritol 2-phosphate-binding positions include 11-13 and 37-38; these read DIH and HS. His-45 is an a divalent metal cation binding site. 4-CDP-2-C-methyl-D-erythritol 2-phosphate-binding positions include 59 to 61, 135 to 138, and Arg-145; these read DIG and TTNE.

It belongs to the IspF family. In terms of assembly, homotrimer. A divalent metal cation is required as a cofactor.

The catalysed reaction is 4-CDP-2-C-methyl-D-erythritol 2-phosphate = 2-C-methyl-D-erythritol 2,4-cyclic diphosphate + CMP. The protein operates within isoprenoid biosynthesis; isopentenyl diphosphate biosynthesis via DXP pathway; isopentenyl diphosphate from 1-deoxy-D-xylulose 5-phosphate: step 4/6. Its function is as follows. Involved in the biosynthesis of isopentenyl diphosphate (IPP) and dimethylallyl diphosphate (DMAPP), two major building blocks of isoprenoid compounds. Catalyzes the conversion of 4-diphosphocytidyl-2-C-methyl-D-erythritol 2-phosphate (CDP-ME2P) to 2-C-methyl-D-erythritol 2,4-cyclodiphosphate (ME-CPP) with a corresponding release of cytidine 5-monophosphate (CMP). This Synechococcus elongatus (strain ATCC 33912 / PCC 7942 / FACHB-805) (Anacystis nidulans R2) protein is 2-C-methyl-D-erythritol 2,4-cyclodiphosphate synthase.